A 217-amino-acid chain; its full sequence is Ranaspumin (217 aa).

Cystine bridges form between C18/C67, C38/C114, C125/C168, and C146/C207.

As to quaternary structure, monomer. Exclusively expressed in females in the early oviduct, the glandular part of the oviduct (pars convoluta dilata) and in the cloaca.

The protein localises to the secreted. In terms of biological role, acts as a surfactant. Is the major protein constituent (45%) of foam nests. Has no antimicrobial activity, no larvicidal activity, and is not toxic to mice. The sequence is that of Ranaspumin from Leptodactylus vastus (Northeastern pepper frog).